Consider the following 206-residue polypeptide: Small ribosomal subunit protein uS4 (206 aa).

The S4 RNA-binding domain maps to 96–156 (NRLDNVTYRI…KNSKLQSRIK (61 aa)).

It belongs to the universal ribosomal protein uS4 family. Part of the 30S ribosomal subunit. Contacts protein S5. The interaction surface between S4 and S5 is involved in control of translational fidelity.

In terms of biological role, one of the primary rRNA binding proteins, it binds directly to 16S rRNA where it nucleates assembly of the body of the 30S subunit. With S5 and S12 plays an important role in translational accuracy. This chain is Small ribosomal subunit protein uS4, found in Buchnera aphidicola subsp. Baizongia pistaciae (strain Bp).